Consider the following 153-residue polypeptide: ORM1-like protein 3 (153 aa).

The important for ceramide level-sensing stretch occupies residues 1–17 (MNVGTAHSEVNPNTRVM). At 1–21 (MNVGTAHSEVNPNTRVMNSRG) the chain is on the cytoplasmic side. The next 2 helical transmembrane spans lie at 22 to 42 (IWLS…SIPF) and 43 to 63 (VSVP…MYIF). The Cytoplasmic segment spans residues 64–94 (LHTVKGTPFETPDQGKARLLTHWEQMDYGVQ). Residues 95–117 (FTASRKFLTITPIVLYFLTSFYT) form a helical membrane-spanning segment. The Extracellular segment spans residues 118–121 (KYDQ). The helical transmembrane segment at 122-142 (VHFILNTVSLMTVLIPKLPQL) threads the bilayer. Proline 137 carries the hydroxyproline modification. Residues 143–153 (HGVRIFGINKY) lie on the Cytoplasmic side of the membrane.

It belongs to the ORM family. In terms of assembly, ceramide-sensitive subunit of the serine palmitoyltransferase (SPT) complex, which is also composed of SPTLC1, SPTLC2/3 and SPTSSA/B. Post-translationally, when hydroxylated at Pro-137, ubiquitinated via 'Lys-48'-linkage, leading to proteasomal degradation. In endothelial cells, ORMDL3 proteasomal degradation is controlled by the sphingosine 1-phosphate receptor signaling pathway.

It localises to the endoplasmic reticulum membrane. In terms of biological role, plays an essential role in the homeostatic regulation of sphingolipid de novo biosynthesis by modulating the activity of the serine palmitoyltransferase (SPT) in response to ceramide levels. When complexed to SPT, the binding of ceramides to its N-terminus stabilizes a conformation that block SPT substrate entry, hence preventing SPT catalytic activity. Through this mechanism, maintains ceramide levels at sufficient concentrations for the production of complex sphingolipids, but which prevents the accumulation of ceramides to levels that trigger apoptosis. In Mus musculus (Mouse), this protein is ORM1-like protein 3 (Ormdl3).